Consider the following 377-residue polypeptide: Glutamate 5-kinase (377 aa).

Lys-18 serves as a coordination point for ATP. Ser-59, Asp-146, and Asn-158 together coordinate substrate. Residues 178–179 (SD) and 222–228 (TGGMATK) contribute to the ATP site. In terms of domain architecture, PUA spans 286-363 (QGWVTVDAGA…DAIEAELGFT (78 aa)).

It belongs to the glutamate 5-kinase family.

It is found in the cytoplasm. It catalyses the reaction L-glutamate + ATP = L-glutamyl 5-phosphate + ADP. It functions in the pathway amino-acid biosynthesis; L-proline biosynthesis; L-glutamate 5-semialdehyde from L-glutamate: step 1/2. In terms of biological role, catalyzes the transfer of a phosphate group to glutamate to form L-glutamate 5-phosphate. The protein is Glutamate 5-kinase of Caulobacter vibrioides (strain ATCC 19089 / CIP 103742 / CB 15) (Caulobacter crescentus).